Reading from the N-terminus, the 107-residue chain is U1-lycotoxin-Ls1t (107 aa).

Positions 1–20 are cleaved as a signal peptide; sequence MMKVLVVVALLVTLISYSSS. The propeptide occupies 21-41; it reads EGIDDLEADELLSLMANEQTR. Intrachain disulfides connect cysteine 44/cysteine 59, cysteine 51/cysteine 68, cysteine 58/cysteine 86, and cysteine 70/cysteine 84.

Belongs to the neurotoxin 19 (CSTX) family. 04 (U1-Lctx) subfamily. Expressed by the venom gland.

Its subcellular location is the secreted. The polypeptide is U1-lycotoxin-Ls1t (Lycosa singoriensis (Wolf spider)).